The primary structure comprises 429 residues: tRNA(Ile2) 2-agmatinylcytidine synthetase TiaS (429 aa).

The segment at residues 271-343 (VRGKVIKKYW…LTLNLEKFYP (73 aa)) is a DNA-binding region (OB).

The protein belongs to the TiaS family.

Its subcellular location is the cytoplasm. The catalysed reaction is cytidine(34) in tRNA(Ile2) + agmatine + ATP + H2O = 2-agmatinylcytidine(34) in tRNA(Ile2) + AMP + 2 phosphate + 2 H(+). Functionally, ATP-dependent agmatine transferase that catalyzes the formation of 2-agmatinylcytidine (agm2C) at the wobble position (C34) of tRNA(Ile2), converting the codon specificity from AUG to AUA. This is tRNA(Ile2) 2-agmatinylcytidine synthetase TiaS from Thermococcus sibiricus (strain DSM 12597 / MM 739).